We begin with the raw amino-acid sequence, 621 residues long: 1-deoxy-D-xylulose-5-phosphate synthase (621 aa).

Residues histidine 80 and 121–123 (GHS) contribute to the thiamine diphosphate site. Aspartate 152 lines the Mg(2+) pocket. Residues 153-154 (GA), asparagine 181, tyrosine 288, and glutamate 370 each bind thiamine diphosphate. Asparagine 181 serves as a coordination point for Mg(2+).

It belongs to the transketolase family. DXPS subfamily. As to quaternary structure, homodimer. Mg(2+) serves as cofactor. The cofactor is thiamine diphosphate.

The catalysed reaction is D-glyceraldehyde 3-phosphate + pyruvate + H(+) = 1-deoxy-D-xylulose 5-phosphate + CO2. It functions in the pathway metabolic intermediate biosynthesis; 1-deoxy-D-xylulose 5-phosphate biosynthesis; 1-deoxy-D-xylulose 5-phosphate from D-glyceraldehyde 3-phosphate and pyruvate: step 1/1. Its function is as follows. Catalyzes the acyloin condensation reaction between C atoms 2 and 3 of pyruvate and glyceraldehyde 3-phosphate to yield 1-deoxy-D-xylulose-5-phosphate (DXP). This is 1-deoxy-D-xylulose-5-phosphate synthase from Shewanella woodyi (strain ATCC 51908 / MS32).